A 141-amino-acid chain; its full sequence is Nucleoside diphosphate kinase (141 aa).

ATP-binding residues include Lys11, Phe59, Arg87, Thr93, Arg104, and Asn114. His117 acts as the Pros-phosphohistidine intermediate in catalysis.

The protein belongs to the NDK family. In terms of assembly, homotetramer. The cofactor is Mg(2+).

It localises to the cytoplasm. The enzyme catalyses a 2'-deoxyribonucleoside 5'-diphosphate + ATP = a 2'-deoxyribonucleoside 5'-triphosphate + ADP. It catalyses the reaction a ribonucleoside 5'-diphosphate + ATP = a ribonucleoside 5'-triphosphate + ADP. Its function is as follows. Major role in the synthesis of nucleoside triphosphates other than ATP. The ATP gamma phosphate is transferred to the NDP beta phosphate via a ping-pong mechanism, using a phosphorylated active-site intermediate. The protein is Nucleoside diphosphate kinase of Pseudomonas putida (strain W619).